The primary structure comprises 117 residues: Ubiquitin-like protein pmt3/smt3 (117 aa).

The disordered stretch occupies residues Met1–Asn37. A compositionally biased stretch (polar residues) spans Ile17–Lys30. A Ubiquitin-like domain is found at His35–Leu115. A Glycyl lysine isopeptide (Gly-Lys) (interchain with K-? in acceptor proteins) cross-link involves residue Gly111. Positions Cys112–Leu117 are excised as a propeptide.

The protein belongs to the ubiquitin family. SUMO subfamily. In terms of assembly, interacts with rfp1.

It is found in the nucleus. Functionally, required for chromosome segregation where it may be involved in microtubule assembly. Loss of smt3 leads to an increase in telomere length. The protein is Ubiquitin-like protein pmt3/smt3 (pmt3) of Schizosaccharomyces pombe (strain 972 / ATCC 24843) (Fission yeast).